A 251-amino-acid polypeptide reads, in one-letter code: MSGHSKWATTKHKKAAIDAKRGKLFAKLIKNIEIAARLGGGDPDGNPSLYDAIYKAKKASMPADNIARAVKRGAGAEDGAANYEDIVYEGYAPAGVGLIIECLTDNRNRAAAEVRSTLTKGNGSLATSGSVSFNFERKGQIVVPSEGVDFDKLFETAAEAGAEDVTDDGEVFTVVTGPSDLFTVRKALQEAGFDYDSADQVMQPKNEVELSLEDARKVSKLIDNLDDLDDVQNIYSNWTASDEVMAQLDEE.

The protein belongs to the TACO1 family.

It localises to the cytoplasm. The sequence is that of Probable transcriptional regulatory protein BLD_0450 from Bifidobacterium longum (strain DJO10A).